We begin with the raw amino-acid sequence, 132 residues long: Ribosome-binding factor A (132 aa).

Residues 113–132 are disordered; that stretch reads EANSTRAKDDDEADAPAKDD.

This sequence belongs to the RbfA family. Monomer. Binds 30S ribosomal subunits, but not 50S ribosomal subunits or 70S ribosomes.

It is found in the cytoplasm. One of several proteins that assist in the late maturation steps of the functional core of the 30S ribosomal subunit. Associates with free 30S ribosomal subunits (but not with 30S subunits that are part of 70S ribosomes or polysomes). Required for efficient processing of 16S rRNA. May interact with the 5'-terminal helix region of 16S rRNA. This Burkholderia ambifaria (strain MC40-6) protein is Ribosome-binding factor A.